A 599-amino-acid polypeptide reads, in one-letter code: Aspartate--tRNA ligase (599 aa).

Glu-180 contributes to the L-aspartate binding site. The segment at 204–207 (QIFK) is aspartate. Arg-226 provides a ligand contact to L-aspartate. ATP is bound by residues 226–228 (RDE) and Gln-235. His-454 contacts L-aspartate. Residue Glu-488 participates in ATP binding. Position 495 (Arg-495) interacts with L-aspartate. 540–543 (GLDR) is a binding site for ATP.

This sequence belongs to the class-II aminoacyl-tRNA synthetase family. Type 1 subfamily. As to quaternary structure, homodimer.

The protein resides in the cytoplasm. The enzyme catalyses tRNA(Asp) + L-aspartate + ATP = L-aspartyl-tRNA(Asp) + AMP + diphosphate. Its function is as follows. Catalyzes the attachment of L-aspartate to tRNA(Asp) in a two-step reaction: L-aspartate is first activated by ATP to form Asp-AMP and then transferred to the acceptor end of tRNA(Asp). The protein is Aspartate--tRNA ligase of Clostridium beijerinckii (strain ATCC 51743 / NCIMB 8052) (Clostridium acetobutylicum).